The primary structure comprises 42 residues: Photosystem II reaction center protein J (42 aa).

A helical transmembrane segment spans residues 10 to 30 (IPLWLVATVAGLAVIALLGVF).

The protein belongs to the PsbJ family. As to quaternary structure, PSII is composed of 1 copy each of membrane proteins PsbA, PsbB, PsbC, PsbD, PsbE, PsbF, PsbH, PsbI, PsbJ, PsbK, PsbL, PsbM, PsbT, PsbX, PsbY, PsbZ, Psb30/Ycf12, at least 3 peripheral proteins of the oxygen-evolving complex and a large number of cofactors. It forms dimeric complexes.

The protein localises to the plastid. It localises to the chloroplast thylakoid membrane. In terms of biological role, one of the components of the core complex of photosystem II (PSII). PSII is a light-driven water:plastoquinone oxidoreductase that uses light energy to abstract electrons from H(2)O, generating O(2) and a proton gradient subsequently used for ATP formation. It consists of a core antenna complex that captures photons, and an electron transfer chain that converts photonic excitation into a charge separation. In Chlorokybus atmophyticus (Soil alga), this protein is Photosystem II reaction center protein J.